The following is a 491-amino-acid chain: GTPase Der (491 aa).

2 consecutive EngA-type G domains span residues 3 to 166 (PVVA…AEAM) and 200 to 373 (IKLA…DSAT). Residues 9-16 (GRPNVGKS), 56-60 (DTGGI), 118-121 (NKVD), 206-213 (GKPNVGKS), 253-257 (DTAGV), and 318-321 (NKWD) contribute to the GTP site. The KH-like domain maps to 374–458 (RRVSTSMLTR…PIQIRFQEGD (85 aa)). Residues 472 to 491 (QERRRKRALSHINDRKTKGE) form a disordered region.

This sequence belongs to the TRAFAC class TrmE-Era-EngA-EngB-Septin-like GTPase superfamily. EngA (Der) GTPase family. In terms of assembly, associates with the 50S ribosomal subunit.

GTPase that plays an essential role in the late steps of ribosome biogenesis. The chain is GTPase Der from Shewanella denitrificans (strain OS217 / ATCC BAA-1090 / DSM 15013).